A 193-amino-acid polypeptide reads, in one-letter code: MNIEISNVAKLPSRFGMFKVQAFKEDEKEHLVIIKEPYKEPVNIRIHSECLTGDAIGSLKCDCRDQLEESLKFIEKNGGMVIYLRQEGRNIGLFNKINAYNLQDKGLDTIEANHQLGFKTDERTYEIVDFILKYYKIKSINLLTNNPKKLMGLHNVKVAARVPIIIKPNKFNEKYLQTKKNEMGHLLDDNKKA.

45–49 is a GTP binding site; it reads RIHSE. Zn(2+) is bound by residues C50, C61, and C63. Residues Q66, 87–89, and T109 contribute to the GTP site; that span reads EGR. The active-site Proton acceptor is D121. Residue R123 is the Nucleophile of the active site. GTP contacts are provided by T144 and K149.

The protein belongs to the GTP cyclohydrolase II family. Requires Zn(2+) as cofactor.

The enzyme catalyses GTP + 4 H2O = 2,5-diamino-6-hydroxy-4-(5-phosphoribosylamino)-pyrimidine + formate + 2 phosphate + 3 H(+). It functions in the pathway cofactor biosynthesis; riboflavin biosynthesis; 5-amino-6-(D-ribitylamino)uracil from GTP: step 1/4. Functionally, catalyzes the conversion of GTP to 2,5-diamino-6-ribosylamino-4(3H)-pyrimidinone 5'-phosphate (DARP), formate and pyrophosphate. In Campylobacter hominis (strain ATCC BAA-381 / DSM 21671 / CCUG 45161 / LMG 19568 / NCTC 13146 / CH001A), this protein is GTP cyclohydrolase-2.